We begin with the raw amino-acid sequence, 256 residues long: Thiazole synthase (256 aa).

Catalysis depends on K96, which acts as the Schiff-base intermediate with DXP. 1-deoxy-D-xylulose 5-phosphate contacts are provided by residues G157, 183–184 (AG), and 205–206 (NT).

It belongs to the ThiG family. As to quaternary structure, homotetramer. Forms heterodimers with either ThiH or ThiS.

It localises to the cytoplasm. It carries out the reaction [ThiS sulfur-carrier protein]-C-terminal-Gly-aminoethanethioate + 2-iminoacetate + 1-deoxy-D-xylulose 5-phosphate = [ThiS sulfur-carrier protein]-C-terminal Gly-Gly + 2-[(2R,5Z)-2-carboxy-4-methylthiazol-5(2H)-ylidene]ethyl phosphate + 2 H2O + H(+). It functions in the pathway cofactor biosynthesis; thiamine diphosphate biosynthesis. In terms of biological role, catalyzes the rearrangement of 1-deoxy-D-xylulose 5-phosphate (DXP) to produce the thiazole phosphate moiety of thiamine. Sulfur is provided by the thiocarboxylate moiety of the carrier protein ThiS. In vitro, sulfur can be provided by H(2)S. This is Thiazole synthase from Bacillus cereus (strain G9842).